A 239-amino-acid chain; its full sequence is tRNA (guanine-N(7)-)-methyltransferase (239 aa).

S-adenosyl-L-methionine contacts are provided by residues Gly64, 87 to 88 (EI), 120 to 121 (NA), and Leu140. Asp143 is a catalytic residue. 218–220 (SEE) contacts S-adenosyl-L-methionine.

The protein belongs to the class I-like SAM-binding methyltransferase superfamily. TrmB family.

Its subcellular location is the nucleus. The catalysed reaction is guanosine(46) in tRNA + S-adenosyl-L-methionine = N(7)-methylguanosine(46) in tRNA + S-adenosyl-L-homocysteine. It functions in the pathway tRNA modification; N(7)-methylguanine-tRNA biosynthesis. Functionally, catalyzes the formation of N(7)-methylguanine at position 46 (m7G46) in tRNA. This Culex quinquefasciatus (Southern house mosquito) protein is tRNA (guanine-N(7)-)-methyltransferase.